The chain runs to 28 residues: Aryl acylamidase (28 aa).

Homodimer.

The enzyme catalyses an anilide + H2O = aniline + a carboxylate + H(+). In Nocardia globerula, this protein is Aryl acylamidase.